The primary structure comprises 278 residues: Sulfur carrier protein FdhD (278 aa).

C121 acts as the Cysteine persulfide intermediate in catalysis. Position 260–265 (260–265 (FCKPGR)) interacts with Mo-bis(molybdopterin guanine dinucleotide).

This sequence belongs to the FdhD family.

The protein resides in the cytoplasm. Its function is as follows. Required for formate dehydrogenase (FDH) activity. Acts as a sulfur carrier protein that transfers sulfur from IscS to the molybdenum cofactor prior to its insertion into FDH. The sequence is that of Sulfur carrier protein FdhD from Salmonella newport (strain SL254).